A 361-amino-acid polypeptide reads, in one-letter code: Cyclin-Y-like protein 2 (361 aa).

One can recognise a Cyclin N-terminal domain in the interval 204–286 (MRLTAEFAIV…QFLKLINYNN (83 aa)).

Belongs to the cyclin family. Cyclin Y subfamily.

This Homo sapiens (Human) protein is Cyclin-Y-like protein 2 (CCNYL2).